Reading from the N-terminus, the 430-residue chain is Protein DSE3 (430 aa).

Ser-395 carries the phosphoserine modification.

It localises to the bud neck. Its function is as follows. May be involved in the establishment of the daughter fate. The sequence is that of Protein DSE3 (DSE3) from Saccharomyces cerevisiae (strain ATCC 204508 / S288c) (Baker's yeast).